The primary structure comprises 605 residues: MASQLSYLQRELLQALLESGVTKEALKKALADGDDYTYPNVPLDDIRNLDEGENCVQLPNGLGESHISEDESSDDGEDFTPPIMKELERLSPEEAAHQKAVVERLLQEDSWHVAKLVKSYLQQHNIPQREVVETTGLNQSHLSQHLNKGTPMKTQKRAALYTWYVGKQREIARLFTFTEFTHAGQGLITDDMSCDEVPTKKMRRNRFKWGPASQQILFQAYERQKNPSKEEREALVEECNRAECLQRGVSPSQAQGLGSNLVTEVRVYNWFANRRKEEAFRHKLAMDTYNGQQNSAPTLSAHDLPHGKTYGFRYIQDSSTDRSAVMANSQSTPSPSALEPSHSLMNSDSKMIPVSGGSLPPVSTLTALHNVDHSQHTLGQTQNLIMASLPSVMTIGTDTALGPAFSNPGSSTLVIGLASQTQSVPVINSVGSSLTTLQSVQFSQQLHPSHQLHPSHQQPIVQQVQSHMAQNPFMATMAQLQSPHAIYSHKPDVAQYASAGFFPQTMVITDTSNLGTLTSLTPSKQVVPLHTTAHGDAPGSQLQNQDSSILHLPLCHRLSPIPTVSSASLVHYHNSSSPENHSHLLSPSHNTIDSFISTQMASSSQ.

Residues 1-31 (MASQLSYLQRELLQALLESGVTKEALKKALA) are dimerization. Positions 1 to 32 (MASQLSYLQRELLQALLESGVTKEALKKALAD) constitute an HNF-p1 domain. Residues 57-81 (QLPNGLGESHISEDESSDDGEDFTP) are disordered. In terms of domain architecture, POU-specific atypical spans 85–180 (KELERLSPEE…IARLFTFTEF (96 aa)). Interaction with DNA stretches follow at residues 128–130 (QRE), 141–147 (HLSQHLN), 153–156 (KTQK), 206–209 (RFKW), 266–268 (RVY), and 273–276 (NRRK). The Nuclear localization signal motif lies at 200–208 (KKMRRNRFK). The segment at residues 202 to 282 (MRRNRFKWGP…NRRKEEAFRH (81 aa)) is a DNA-binding region (homeobox; HNF1-type). The segment covering 321–335 (DRSAVMANSQSTPSP) has biased composition (polar residues). The tract at residues 321–343 (DRSAVMANSQSTPSPSALEPSHS) is disordered. Residues 448 to 453 (PSHQLH) are not present in other members of the HNF1 family.

Belongs to the HNF1 homeobox family. Binds DNA as dimer. Forms a homodimer or heterodimer with HNF1-alpha-B. Potentially also form a heterodimer with HNF1-beta. Protein expressed in liver, stomach, small intestine, colon and kidney. Not expressed in spleen, lung, blood, heart muscle, skeletal muscle, testis and brain.

The protein localises to the nucleus. Its function is as follows. Transcriptional activator that regulates the tissue specific expression of multiple genes, especially in pancreas and liver. Binds to the hepatocyte specific promoter element HP1. Binds to the inverted palindrome 5'-GTTAATNATTAAC-3'. This Xenopus laevis (African clawed frog) protein is Hepatocyte nuclear factor 1-alpha-A (hnf1a-a).